A 104-amino-acid polypeptide reads, in one-letter code: L-rhamnose mutarotase (104 aa).

Tyr18 contacts substrate. His22 acts as the Proton donor in catalysis. Residues Tyr41 and 76–77 (WW) contribute to the substrate site.

Belongs to the rhamnose mutarotase family. As to quaternary structure, homodimer.

The protein resides in the cytoplasm. It catalyses the reaction alpha-L-rhamnose = beta-L-rhamnose. Its pathway is carbohydrate metabolism; L-rhamnose metabolism. Functionally, involved in the anomeric conversion of L-rhamnose. In Escherichia coli O17:K52:H18 (strain UMN026 / ExPEC), this protein is L-rhamnose mutarotase.